Reading from the N-terminus, the 258-residue chain is Thiazole synthase (258 aa).

The Schiff-base intermediate with DXP role is filled by lysine 100. 1-deoxy-D-xylulose 5-phosphate is bound by residues glycine 161, 187–188 (AG), and 209–210 (NT).

It belongs to the ThiG family. As to quaternary structure, homotetramer. Forms heterodimers with either ThiH or ThiS.

It is found in the cytoplasm. It carries out the reaction [ThiS sulfur-carrier protein]-C-terminal-Gly-aminoethanethioate + 2-iminoacetate + 1-deoxy-D-xylulose 5-phosphate = [ThiS sulfur-carrier protein]-C-terminal Gly-Gly + 2-[(2R,5Z)-2-carboxy-4-methylthiazol-5(2H)-ylidene]ethyl phosphate + 2 H2O + H(+). The protein operates within cofactor biosynthesis; thiamine diphosphate biosynthesis. Its function is as follows. Catalyzes the rearrangement of 1-deoxy-D-xylulose 5-phosphate (DXP) to produce the thiazole phosphate moiety of thiamine. Sulfur is provided by the thiocarboxylate moiety of the carrier protein ThiS. In vitro, sulfur can be provided by H(2)S. The chain is Thiazole synthase from Campylobacter jejuni subsp. jejuni serotype O:6 (strain 81116 / NCTC 11828).